A 178-amino-acid chain; its full sequence is Fimbrial adapter PapK (178 aa).

A signal peptide spans 1-21; it reads MIKSTGALLLFAALSAGQAIA.

It localises to the secreted. The protein resides in the fimbrium. Adapter that links the pilus rod to the base of the tip fibrillum. Regulates the length of the tip fibrillum and joins it to the pilus rod. Pili are polar filaments radiating from the surface of the bacterium to a length of 0.5-1.5 micrometers and numbering 100-300 per cell, and enable bacteria to colonize the epithelium of specific host organs. In Escherichia coli O6:H1 (strain CFT073 / ATCC 700928 / UPEC), this protein is Fimbrial adapter PapK (papK).